Here is a 91-residue protein sequence, read N- to C-terminus: Mercuric transport protein periplasmic component (91 aa).

The N-terminal stretch at 1–19 (MKKLFASLALAAVVAPVWA) is a signal peptide. One can recognise an HMA domain in the interval 22–88 (QTVTLSVPGM…ATADAGYPSS (67 aa)). Hg(2+) contacts are provided by Cys33 and Cys36.

Belongs to the MerP family. In terms of assembly, monomer.

Its subcellular location is the periplasm. Involved in mercury resistance. Acts as a mercury scavenger that specifically binds to a mercuric ion in the periplasm and probably passes it to the cytoplasmic mercuric reductase MerA via the mercuric transport protein MerT. This chain is Mercuric transport protein periplasmic component, found in Pseudomonas aeruginosa.